We begin with the raw amino-acid sequence, 247 residues long: DNA polymerase sliding clamp 1 (247 aa).

This sequence belongs to the PCNA family. As to quaternary structure, homotrimer. The subunits circularize to form a toroid; DNA passes through its center. Replication factor C (RFC) is required to load the toroid on the DNA.

In terms of biological role, sliding clamp subunit that acts as a moving platform for DNA processing. Responsible for tethering the catalytic subunit of DNA polymerase and other proteins to DNA during high-speed replication. This Sulfolobus acidocaldarius (strain ATCC 33909 / DSM 639 / JCM 8929 / NBRC 15157 / NCIMB 11770) protein is DNA polymerase sliding clamp 1.